Consider the following 155-residue polypeptide: Regulatory protein RecX (155 aa).

It belongs to the RecX family.

The protein resides in the cytoplasm. Modulates RecA activity. In Pseudomonas fluorescens (strain ATCC BAA-477 / NRRL B-23932 / Pf-5), this protein is Regulatory protein RecX.